A 220-amino-acid polypeptide reads, in one-letter code: Deoxyribose-phosphate aldolase 2 (220 aa).

D89 functions as the Proton donor/acceptor in the catalytic mechanism. Residue K151 is the Schiff-base intermediate with acetaldehyde of the active site. K180 acts as the Proton donor/acceptor in catalysis.

The protein belongs to the DeoC/FbaB aldolase family. DeoC type 1 subfamily.

Its subcellular location is the cytoplasm. It catalyses the reaction 2-deoxy-D-ribose 5-phosphate = D-glyceraldehyde 3-phosphate + acetaldehyde. Its pathway is carbohydrate degradation; 2-deoxy-D-ribose 1-phosphate degradation; D-glyceraldehyde 3-phosphate and acetaldehyde from 2-deoxy-alpha-D-ribose 1-phosphate: step 2/2. In terms of biological role, catalyzes a reversible aldol reaction between acetaldehyde and D-glyceraldehyde 3-phosphate to generate 2-deoxy-D-ribose 5-phosphate. This is Deoxyribose-phosphate aldolase 2 from Staphylococcus aureus (strain COL).